We begin with the raw amino-acid sequence, 360 residues long: Chorismate synthase (360 aa).

Positions 48 and 54 each coordinate NADP(+). Residues 125–127, 246–247, Gly286, 301–305, and Arg327 contribute to the FMN site; these read RSS, NA, and KPTSS.

This sequence belongs to the chorismate synthase family. As to quaternary structure, homotetramer. Requires FMNH2 as cofactor.

The catalysed reaction is 5-O-(1-carboxyvinyl)-3-phosphoshikimate = chorismate + phosphate. Its pathway is metabolic intermediate biosynthesis; chorismate biosynthesis; chorismate from D-erythrose 4-phosphate and phosphoenolpyruvate: step 7/7. Its function is as follows. Catalyzes the anti-1,4-elimination of the C-3 phosphate and the C-6 proR hydrogen from 5-enolpyruvylshikimate-3-phosphate (EPSP) to yield chorismate, which is the branch point compound that serves as the starting substrate for the three terminal pathways of aromatic amino acid biosynthesis. This reaction introduces a second double bond into the aromatic ring system. This is Chorismate synthase from Actinobacillus pleuropneumoniae serotype 5b (strain L20).